The primary structure comprises 586 residues: Phosphoenolpyruvate-protein phosphotransferase (586 aa).

His201 functions as the Tele-phosphohistidine intermediate in the catalytic mechanism. Phosphoenolpyruvate is bound by residues Arg308 and Arg345. Glu446 and Asp470 together coordinate Mg(2+). Phosphoenolpyruvate contacts are provided by residues 469-470 (ND) and Arg480. The active-site Proton donor is Cys517.

This sequence belongs to the PEP-utilizing enzyme family. As to quaternary structure, homodimer. The cofactor is Mg(2+).

The protein resides in the cytoplasm. The catalysed reaction is L-histidyl-[protein] + phosphoenolpyruvate = N(pros)-phospho-L-histidyl-[protein] + pyruvate. In terms of biological role, general (non sugar-specific) component of the phosphoenolpyruvate-dependent sugar phosphotransferase system (sugar PTS). This major carbohydrate active-transport system catalyzes the phosphorylation of incoming sugar substrates concomitantly with their translocation across the cell membrane. Enzyme I transfers the phosphoryl group from phosphoenolpyruvate (PEP) to the phosphoryl carrier protein (HPr). The chain is Phosphoenolpyruvate-protein phosphotransferase from Cupriavidus necator (strain ATCC 17699 / DSM 428 / KCTC 22496 / NCIMB 10442 / H16 / Stanier 337) (Ralstonia eutropha).